Here is a 192-residue protein sequence, read N- to C-terminus: dTTP/UTP pyrophosphatase (192 aa).

Residue Asp70 is the Proton acceptor of the active site.

It belongs to the Maf family. YhdE subfamily. A divalent metal cation is required as a cofactor.

The protein localises to the cytoplasm. It catalyses the reaction dTTP + H2O = dTMP + diphosphate + H(+). The enzyme catalyses UTP + H2O = UMP + diphosphate + H(+). Functionally, nucleoside triphosphate pyrophosphatase that hydrolyzes dTTP and UTP. May have a dual role in cell division arrest and in preventing the incorporation of modified nucleotides into cellular nucleic acids. This chain is dTTP/UTP pyrophosphatase, found in Alkaliphilus metalliredigens (strain QYMF).